A 578-amino-acid chain; its full sequence is Arginine--tRNA ligase (578 aa).

Positions 127-137 (PNLAKEMHVGH) match the 'HIGH' region motif.

The protein belongs to the class-I aminoacyl-tRNA synthetase family. Monomer.

The protein localises to the cytoplasm. The catalysed reaction is tRNA(Arg) + L-arginine + ATP = L-arginyl-tRNA(Arg) + AMP + diphosphate. The protein is Arginine--tRNA ligase of Pseudomonas fluorescens (strain SBW25).